A 185-amino-acid polypeptide reads, in one-letter code: Ribosome-recycling factor (185 aa).

The protein belongs to the RRF family.

The protein localises to the cytoplasm. Functionally, responsible for the release of ribosomes from messenger RNA at the termination of protein biosynthesis. May increase the efficiency of translation by recycling ribosomes from one round of translation to another. In Streptococcus equi subsp. equi (strain 4047), this protein is Ribosome-recycling factor.